A 72-amino-acid chain; its full sequence is ATP-dependent Clp protease ATP-binding subunit ClpA homolog (72 aa).

It belongs to the ClpA/ClpB family.

The protein resides in the plastid. It is found in the chloroplast. May interact with a ClpP-like protease involved in degradation of denatured proteins in the chloroplast. This chain is ATP-dependent Clp protease ATP-binding subunit ClpA homolog, found in Populus euphratica (Euphrates poplar).